The chain runs to 452 residues: Elongation factor Tu, mitochondrial (452 aa).

A mitochondrion-targeting transit peptide spans 1–43 (MAAATLLRATPRFSGLCASPTPFLQGRLRPLKAPASPFLCRGL). Residues 55-251 (KPHVNVGTIG…AVDTYIPVPT (197 aa)) enclose the tr-type G domain. The segment at 64 to 71 (GHVDHGKT) is G1. 5 residues coordinate GTP: aspartate 67, glycine 69, lysine 70, threonine 71, and threonine 72. Threonine 71 is a Mg(2+) binding site. Lysine 79 carries the post-translational modification N6-acetyllysine. At lysine 88 the chain carries N6-acetyllysine; alternate. Position 88 is an N6-succinyllysine; alternate (lysine 88). The tract at residues 105–109 (GITIN) is G2. The interval 126–129 (DCPG) is G3. Asparagine 181, aspartate 184, serine 219, alanine 220, and leucine 221 together coordinate GTP. The G4 stretch occupies residues 181-184 (NKAD). A G5 region spans residues 219–221 (SAL). An N6-succinyllysine modification is found at lysine 234. Residue lysine 256 is modified to N6-acetyllysine. Threonine 278 is subject to Phosphothreonine. Lysine 286 carries the N6-succinyllysine modification. Residue serine 312 is modified to Phosphoserine. Lysine 361 and lysine 418 each carry N6-acetyllysine.

It belongs to the TRAFAC class translation factor GTPase superfamily. Classic translation factor GTPase family. EF-Tu/EF-1A subfamily. As to quaternary structure, interacts with NLRX1. Interacts with ATG16L1.

It is found in the mitochondrion. It catalyses the reaction GTP + H2O = GDP + phosphate + H(+). In terms of biological role, GTP hydrolase that promotes the GTP-dependent binding of aminoacyl-tRNA to the A-site of ribosomes during protein biosynthesis. Also plays a role in the regulation of autophagy and innate immunity. Recruits ATG5-ATG12 and NLRX1 at mitochondria and serves as a checkpoint of the RIGI-MAVS pathway. In turn, inhibits RLR-mediated type I interferon while promoting autophagy. This Mus musculus (Mouse) protein is Elongation factor Tu, mitochondrial (Tufm).